A 203-amino-acid polypeptide reads, in one-letter code: Small ribosomal subunit protein uS5 (203 aa).

An S5 DRBM domain is found at 51 to 114; the sequence is LEDEVLDITM…ENAKLNVVRI (64 aa).

It belongs to the universal ribosomal protein uS5 family. Part of the 30S ribosomal subunit. Contacts protein S4.

Its function is as follows. With S4 and S12 plays an important role in translational accuracy. The chain is Small ribosomal subunit protein uS5 from Methanothrix thermoacetophila (strain DSM 6194 / JCM 14653 / NBRC 101360 / PT) (Methanosaeta thermophila).